A 151-amino-acid polypeptide reads, in one-letter code: Putative pre-16S rRNA nuclease (151 aa).

Belongs to the YqgF nuclease family.

Its subcellular location is the cytoplasm. Its function is as follows. Could be a nuclease involved in processing of the 5'-end of pre-16S rRNA. This Aster yellows witches'-broom phytoplasma (strain AYWB) protein is Putative pre-16S rRNA nuclease.